A 314-amino-acid chain; its full sequence is Olfactory receptor 9Q2 (314 aa).

The Extracellular portion of the chain corresponds to 1–25 (MAERNYTVVTEFFLTAFTEHLQWRV). N-linked (GlcNAc...) asparagine glycosylation is present at Asn-5. A helical transmembrane segment spans residues 26–46 (PLFLIFLSFYLATMLGNTGMI). Residues 47-54 (LLIRGDRR) are Cytoplasmic-facing. A helical transmembrane segment spans residues 55–75 (LHTPMYFFLSHLSLVDICYSS). At 76-99 (AIIPQMLAVLWEHGTTISQARCAA) the chain is on the extracellular side. Cys-97 and Cys-189 are joined by a disulfide. Residues 100 to 120 (QFFLFTFFASIDCYLLAIMAY) traverse the membrane as a helical segment. Residues 121-139 (DRYTAVCQPLLYVTIITEK) are Cytoplasmic-facing. Residues 140 to 160 (ARWGLVTGAYVAGFFSAFVRT) traverse the membrane as a helical segment. The Extracellular segment spans residues 161–197 (VTAFTLSFCGNNEINFIFCDLPPLLKLSCGDSYTQEV). A helical membrane pass occupies residues 198–217 (VIIVFALFVMPACILVILVS). At 218–237 (YLFIIVAILQIHSAGGRAKT) the chain is on the cytoplasmic side. The chain crosses the membrane as a helical span at residues 238–258 (FSTCASHLTAVALFFGTLIFM). Residues 259 to 271 (YLRDNTGQSSEGD) lie on the Extracellular side of the membrane. The chain crosses the membrane as a helical span at residues 272–292 (RVVSVLYTVVTPMLNPLIYSL). The Cytoplasmic portion of the chain corresponds to 293 to 314 (RNKEVKEATRKALSKSKPARRP).

It belongs to the G-protein coupled receptor 1 family.

The protein resides in the cell membrane. In terms of biological role, odorant receptor. In Homo sapiens (Human), this protein is Olfactory receptor 9Q2 (OR9Q2).